The sequence spans 232 residues: Expansin-YoaJ (232 aa).

A signal peptide spans 1–25 (MKKIMSAFVGMVLLTIFCFSPQASA). The Expansin-like EG45 domain maps to 58–127 (ITAINPADLN…MKDGKINIKW (70 aa)).

The protein resides in the secreted. It is found in the cell wall. Functionally, may promote colonization of plant roots. May cause loosening and extension of plant cell walls by disrupting non-covalent bonding between cellulose microfibrils and matrix glucans. Has very low expansin activity (in vitro). No enzymatic activity has been found. Binds to peptidoglycan and to plant cell walls. The chain is Expansin-YoaJ (yoaJ) from Bacillus subtilis (strain 168).